Reading from the N-terminus, the 377-residue chain is tRNA(Met) cytidine acetate ligase (377 aa).

Residues 7-20 (ITEY…HLFH), Gly100, Asn153, and Arg178 contribute to the ATP site.

This sequence belongs to the TmcAL family.

It is found in the cytoplasm. It catalyses the reaction cytidine(34) in elongator tRNA(Met) + acetate + ATP = N(4)-acetylcytidine(34) in elongator tRNA(Met) + AMP + diphosphate. In terms of biological role, catalyzes the formation of N(4)-acetylcytidine (ac(4)C) at the wobble position of elongator tRNA(Met), using acetate and ATP as substrates. First activates an acetate ion to form acetyladenylate (Ac-AMP) and then transfers the acetyl group to tRNA to form ac(4)C34. This Staphylococcus epidermidis (strain ATCC 35984 / DSM 28319 / BCRC 17069 / CCUG 31568 / BM 3577 / RP62A) protein is tRNA(Met) cytidine acetate ligase.